Reading from the N-terminus, the 545-residue chain is Metal transporter NRAT1 (545 aa).

12 helical membrane passes run Phe51–Leu71, Glu84–Ala104, Ile128–Gly148, Ile155–Leu175, Phe188–Leu208, Ile234–Leu254, Leu278–Cys298, Val333–Ala353, Leu373–Ala395, Leu398–Leu418, Val437–Trp457, and Gly474–Leu494. The tract at residues Glu516–Met545 is disordered. The segment covering Tyr536 to Met545 has biased composition (basic and acidic residues).

This sequence belongs to the NRAMP (TC 2.A.55) family. Expressed at low levels in roots.

Its subcellular location is the cell membrane. Functionally, metal transporter that transports the trivalent cation aluminum (Al(3+)), but does not seem to transport divalent cations such as iron (Fe(2+)), manganese (Mg(2+)) or Cadmium (Cd(2+)). Involved in Al tolerance by taking up Al in root cells, where it is detoxified by chelation with organic acid anions and sequestration into the vacuoles. This chain is Metal transporter NRAT1 (NRAT1), found in Oryza sativa subsp. japonica (Rice).